The following is a 413-amino-acid chain: Gamma-glutamyl phosphate reductase (413 aa).

It belongs to the gamma-glutamyl phosphate reductase family.

Its subcellular location is the cytoplasm. The enzyme catalyses L-glutamate 5-semialdehyde + phosphate + NADP(+) = L-glutamyl 5-phosphate + NADPH + H(+). It functions in the pathway amino-acid biosynthesis; L-proline biosynthesis; L-glutamate 5-semialdehyde from L-glutamate: step 2/2. Catalyzes the NADPH-dependent reduction of L-glutamate 5-phosphate into L-glutamate 5-semialdehyde and phosphate. The product spontaneously undergoes cyclization to form 1-pyrroline-5-carboxylate. The sequence is that of Gamma-glutamyl phosphate reductase from Lactococcus lactis subsp. cremoris (strain MG1363).